The chain runs to 401 residues: Protein KlcB (401 aa).

The tract at residues A253–R311 is disordered.

The polypeptide is Protein KlcB (klcB) (Escherichia coli).